The following is a 251-amino-acid chain: Methionine aminopeptidase (251 aa).

H77 is a substrate binding site. A divalent metal cation-binding residues include D94, D105, and H169. H176 contacts substrate. Residues E202 and E233 each contribute to the a divalent metal cation site.

The protein belongs to the peptidase M24A family. Methionine aminopeptidase type 1 subfamily. Monomer. Requires Co(2+) as cofactor. It depends on Zn(2+) as a cofactor. The cofactor is Mn(2+). Fe(2+) serves as cofactor.

It carries out the reaction Release of N-terminal amino acids, preferentially methionine, from peptides and arylamides.. Its function is as follows. Removes the N-terminal methionine from nascent proteins. The N-terminal methionine is often cleaved when the second residue in the primary sequence is small and uncharged (Met-Ala-, Cys, Gly, Pro, Ser, Thr, or Val). Requires deformylation of the N(alpha)-formylated initiator methionine before it can be hydrolyzed. The sequence is that of Methionine aminopeptidase from Mycoplasma capricolum subsp. capricolum (strain California kid / ATCC 27343 / NCTC 10154).